We begin with the raw amino-acid sequence, 235 residues long: NADH-quinone oxidoreductase subunit C (235 aa).

Belongs to the complex I 30 kDa subunit family. NDH-1 is composed of 14 different subunits. Subunits NuoB, C, D, E, F, and G constitute the peripheral sector of the complex.

The protein resides in the cell membrane. The enzyme catalyses a quinone + NADH + 5 H(+)(in) = a quinol + NAD(+) + 4 H(+)(out). NDH-1 shuttles electrons from NADH, via FMN and iron-sulfur (Fe-S) centers, to quinones in the respiratory chain. The immediate electron acceptor for the enzyme in this species is believed to be a menaquinone. Couples the redox reaction to proton translocation (for every two electrons transferred, four hydrogen ions are translocated across the cytoplasmic membrane), and thus conserves the redox energy in a proton gradient. This Mycolicibacterium paratuberculosis (strain ATCC BAA-968 / K-10) (Mycobacterium paratuberculosis) protein is NADH-quinone oxidoreductase subunit C.